We begin with the raw amino-acid sequence, 415 residues long: Methylthioribose-1-phosphate isomerase (415 aa).

Residue aspartate 284 is the Proton donor of the active site.

Belongs to the eIF-2B alpha/beta/delta subunits family. MtnA subfamily.

The protein resides in the cytoplasm. Its subcellular location is the nucleus. The enzyme catalyses 5-(methylsulfanyl)-alpha-D-ribose 1-phosphate = 5-(methylsulfanyl)-D-ribulose 1-phosphate. It functions in the pathway amino-acid biosynthesis; L-methionine biosynthesis via salvage pathway; L-methionine from S-methyl-5-thio-alpha-D-ribose 1-phosphate: step 1/6. Catalyzes the interconversion of methylthioribose-1-phosphate (MTR-1-P) into methylthioribulose-1-phosphate (MTRu-1-P). This is Methylthioribose-1-phosphate isomerase from Candida glabrata (strain ATCC 2001 / BCRC 20586 / JCM 3761 / NBRC 0622 / NRRL Y-65 / CBS 138) (Yeast).